We begin with the raw amino-acid sequence, 101 residues long: Small ribosomal subunit protein uS14 (101 aa).

The segment covering 1-11 (MAKKSAIETNE) has biased composition (basic and acidic residues). The tract at residues 1–24 (MAKKSAIETNERRRKLSQSKAAKR) is disordered. Positions 12 to 24 (RRRKLSQSKAAKR) are enriched in basic residues.

Belongs to the universal ribosomal protein uS14 family. Part of the 30S ribosomal subunit. Contacts proteins S3 and S10.

Functionally, binds 16S rRNA, required for the assembly of 30S particles and may also be responsible for determining the conformation of the 16S rRNA at the A site. This chain is Small ribosomal subunit protein uS14, found in Azorhizobium caulinodans (strain ATCC 43989 / DSM 5975 / JCM 20966 / LMG 6465 / NBRC 14845 / NCIMB 13405 / ORS 571).